Reading from the N-terminus, the 473-residue chain is MRSYMQILQKFAKFIGPGILVSVAYMDPGNYATSVSGGAQYKYTLLFSIFISNIFAVLLQCLCVKLGTITGYDLAENCRHNLPKKLNYTLYLFAEVAIIATDLAEVVGTAIALQILFKIPLTWGVLLTVLDVLVILMFYTPNGQSLKKVRVFEFGVGILVIGTCICFVLELFKVSIPDKAELFKGFLPSNIIFKEQQALYISLGILGATVMPHSLYLGSSIVKPRLHDYDLKKYGKVNARPSLSAIKYTLNYAYAELIISLFLIATFVNSAILIVAGATLSGQPEAEDADLLSIYKLLVHYISPAAGLIFALAMLCSGQSAGIICTLAGQIVSEGFLQWSLPPWATRLCTRLIAIVPCLFVTLTMGEKGISDILNFSQVVLSLILPIVSAPLIYFTANRKLMVVHDENGVVRAPADVNAIADETTPLNSKHSKIVDFTNSRLLTYTSVFVWALIGSLNCYLVISYLLGADIHF.

A run of 2 helical transmembrane segments spans residues 14–34 and 44–64; these read FIGP…YATS and TLLF…CLCV. Asn87 carries an N-linked (GlcNAc...) asparagine glycan. Helical transmembrane passes span 97–117, 119–139, 152–172, 198–218, 257–277, 297–317, 352–372, 373–393, and 448–468; these read AIIA…QILF, IPLT…LMFY, FEFG…LELF, ALYI…LYLG, LIIS…IVAG, LLVH…MLCS, LIAI…GISD, ILNF…APLI, and VFVW…YLLG.

Belongs to the NRAMP family.

It localises to the vacuole membrane. Its subcellular location is the endoplasmic reticulum membrane. Functionally, has a role in controlling the cellular iron ion levels. Mobilizes vacuolar stores of iron in conditions of low iron levels. The protein is Iron transporter SMF3 (SMF3) of Saccharomyces cerevisiae (strain ATCC 204508 / S288c) (Baker's yeast).